Consider the following 402-residue polypeptide: N-acetyltransferase Eis (402 aa).

The N-acetyltransferase domain occupies 3-154 (VTLCSPTEDD…RFARFHADAP (152 aa)). Acetyl-CoA contacts are provided by residues 85–87 (VAV), 93–98 (RRGLLR), and 121–122 (SE). Catalysis depends on tyrosine 126, which acts as the Proton donor. Phenylalanine 402 functions as the Proton acceptor; via carboxylate in the catalytic mechanism.

It belongs to the acetyltransferase Eis family. As to quaternary structure, homohexamer; trimer of dimers.

The protein localises to the secreted. The protein resides in the host cytoplasmic vesicle. It localises to the host phagosome. Its subcellular location is the extracellular vesicle. It is found in the bacterial extracellular vesicle. The protein localises to the host extracellular space. It carries out the reaction L-lysyl-[protein] + acetyl-CoA = N(6)-acetyl-L-lysyl-[protein] + CoA + H(+). Functionally, effector that is released into the host cell and affects host immune responses. Acts as an acetyltransferase that acetylates lysine residues of host proteins. This chain is N-acetyltransferase Eis, found in Mycobacterium bovis (strain BCG / Pasteur 1173P2).